A 215-amino-acid polypeptide reads, in one-letter code: L-fuculose phosphate aldolase (215 aa).

Substrate is bound by residues 28 to 29 (GN), 43 to 44 (TG), and 71 to 72 (SS). E73 (proton donor/acceptor) is an active-site residue. The Zn(2+) site is built by E73, H92, H94, and H155.

Belongs to the aldolase class II family. AraD/FucA subfamily. Homotetramer. Zn(2+) serves as cofactor.

The catalysed reaction is L-fuculose 1-phosphate = (S)-lactaldehyde + dihydroxyacetone phosphate. It participates in carbohydrate degradation; L-fucose degradation; L-lactaldehyde and glycerone phosphate from L-fucose: step 3/3. Inhibited by phosphoglycolohydroxamate (PGH). Involved in the degradation of L-fucose and D-arabinose. Catalyzes the reversible cleavage of L-fuculose 1-phosphate (Fuc1P) to yield dihydroxyacetone phosphate (DHAP) and L-lactaldehyde. Also able to catalyze the reversible cleavage of D-ribulose 1-phosphate, but FucA has a higher affinity for L-fuculose 1-phosphate and L-lactaldehyde than for D-ribulose 1-phosphate and glycolaldehyde, respectively. FucA possesses a high specificity for the dihydroxyacetone phosphate (DHAP), but accepts a great variety of different aldehydes and has a strong preference for L-configurated alpha-hydroxy aldehydes. FucA generates a vicinal diol unit having the absolute (3R,4R)-cis configuration (D-erythro). The protein is L-fuculose phosphate aldolase of Escherichia coli (strain K12).